We begin with the raw amino-acid sequence, 218 residues long: Mitochondrial fission factor (218 aa).

The Cytoplasmic segment spans residues 1–198 (MAEISRIQYE…ENKERAKREM (198 aa)). At Thr-89 the chain carries Phosphothreonine. Residues Ser-129, Ser-131, Ser-146, and Ser-171 each carry the phosphoserine modification. Residues 167–198 (VDAASLRRQIIKLNRRLQLLEEENKERAKREM) adopt a coiled-coil conformation. Residues 199 to 216 (VMYSITVAFWLLNSWLWF) form a helical; Anchor for type IV membrane protein membrane-spanning segment. Residues 217–218 (RR) are Mitochondrial intermembrane-facing.

The protein belongs to the Tango11 family. In terms of assembly, homodimer. Interacts with DNM1L. Interacts with C11orf65/MFI; the interaction inhibits MFF interaction with DNM1L.

The protein localises to the mitochondrion outer membrane. It localises to the peroxisome. The protein resides in the cytoplasmic vesicle. It is found in the secretory vesicle. Its subcellular location is the synaptic vesicle. Plays a role in mitochondrial and peroxisomal fission. Promotes the recruitment and association of the fission mediator dynamin-related protein 1 (DNM1L) to the mitochondrial surface. May be involved in regulation of synaptic vesicle membrane dynamics by recruitment of DNM1L to clathrin-containing vesicles. In Rattus norvegicus (Rat), this protein is Mitochondrial fission factor (Mff).